The primary structure comprises 128 residues: Aspartate 1-decarboxylase (128 aa).

The Schiff-base intermediate with substrate; via pyruvic acid role is filled by serine 25. Serine 25 bears the Pyruvic acid (Ser) mark. A substrate-binding site is contributed by threonine 57. The Proton donor role is filled by tyrosine 58. 73–75 provides a ligand contact to substrate; sequence GAA.

This sequence belongs to the PanD family. In terms of assembly, heterooctamer of four alpha and four beta subunits. Pyruvate is required as a cofactor. In terms of processing, is synthesized initially as an inactive proenzyme, which is activated by self-cleavage at a specific serine bond to produce a beta-subunit with a hydroxyl group at its C-terminus and an alpha-subunit with a pyruvoyl group at its N-terminus.

It is found in the cytoplasm. It carries out the reaction L-aspartate + H(+) = beta-alanine + CO2. The protein operates within cofactor biosynthesis; (R)-pantothenate biosynthesis; beta-alanine from L-aspartate: step 1/1. Catalyzes the pyruvoyl-dependent decarboxylation of aspartate to produce beta-alanine. In Chlorobium luteolum (strain DSM 273 / BCRC 81028 / 2530) (Pelodictyon luteolum), this protein is Aspartate 1-decarboxylase.